The following is a 96-amino-acid chain: UPF0235 protein VIBHAR_03581 (96 aa).

Belongs to the UPF0235 family.

The polypeptide is UPF0235 protein VIBHAR_03581 (Vibrio campbellii (strain ATCC BAA-1116)).